The chain runs to 147 residues: Large ribosomal subunit protein uL13 (147 aa).

This sequence belongs to the universal ribosomal protein uL13 family. As to quaternary structure, part of the 50S ribosomal subunit.

In terms of biological role, this protein is one of the early assembly proteins of the 50S ribosomal subunit, although it is not seen to bind rRNA by itself. It is important during the early stages of 50S assembly. This Leuconostoc mesenteroides subsp. mesenteroides (strain ATCC 8293 / DSM 20343 / BCRC 11652 / CCM 1803 / JCM 6124 / NCDO 523 / NBRC 100496 / NCIMB 8023 / NCTC 12954 / NRRL B-1118 / 37Y) protein is Large ribosomal subunit protein uL13.